The sequence spans 336 residues: Corrinoid adenosyltransferase PduO (336 aa).

The tract at residues 1–185 (MAIYTRTGDA…IIREVSKRYL (185 aa)) is pduON. A pduOC region spans residues 194–336 (KETTPVALSF…IAAINVGTHQ (143 aa)). Residue His207 coordinates heme. The Mg(2+) site is built by Glu215 and Gln218.

It belongs to the Cob(I)alamin adenosyltransferase family. PduO subfamily. The C-terminal domain (PduOC) forms stable octamers and also crystallizes as an octamer. Forms a complex with PduS. Heme b serves as cofactor. The cofactor is Mg(2+).

Its subcellular location is the bacterial microcompartment. The enzyme catalyses cob(I)alamin-[corrinoid adenosyltransferase] + ATP = apo-[corrinoid adenosyltransferase] + adenosylcob(III)alamin + triphosphate. The protein operates within polyol metabolism; 1,2-propanediol degradation. It functions in the pathway cofactor biosynthesis; adenosylcobalamin biosynthesis. Inhibited by ADP but not significantly by other nucleotides, inhibited by diphosphate and less well by triphosphate. Functionally, converts cob(I)alamin to adenosylcobalamin (adenosylcob(III)alamin), the cofactor for propanediol dehydratase. Found in the bacterial microcompartment (BMC) dedicated to 1,2-propanediol (1,2-PD) degradation. For adenosylcobalamin synthesis dATP can replace ATP, but no other nucleotides will substitute. PduS and PduO allow regeneration of the adenosylcobalamin cofactor within the BMC. The 1,2-PD-specific bacterial microcompartment (BMC) concentrates low levels of 1,2-PD catabolic enzymes, concentrates volatile reaction intermediates thus enhancing pathway flux and keeps the level of toxic, mutagenic propionaldehyde low. The protein is Corrinoid adenosyltransferase PduO of Salmonella typhimurium (strain LT2 / SGSC1412 / ATCC 700720).